Consider the following 479-residue polypeptide: Ankyrin repeat, SAM and basic leucine zipper domain-containing protein 1 (479 aa).

Phosphoserine occurs at positions 22 and 24. ANK repeat units follow at residues 49–78, 82–111, 114–148, 152–181, 185–214, and 218–247; these read EKNETFKKALTTGDILLVKELLNSGISVDS, YGWTPLMYAASVSNVELVRVLLDRGANASF, DKQTILITACSARGSEEQILKCVELLLSRNADPNV, RLMTPIMYAARDGHTQVVALLVAHGAEVNT, NGYTALTWAARQGHKNVVLKLLELGANKML, and DGKTPSEIAKRNKHVEIFSFLSLTLNPLEG. The SAM domain maps to 276–338; it reads SYTALGDLEI…KILDALKELQ (63 aa).

As to quaternary structure, interacts with DDX4, PIWIL1, RANBP9 and TDRD1.

The protein localises to the cytoplasm. Functionally, plays a central role during spermatogenesis by repressing transposable elements and preventing their mobilization, which is essential for the germline integrity. Acts via the piRNA metabolic process, which mediates the repression of transposable elements during meiosis by forming complexes composed of piRNAs and Piwi proteins and governs the methylation and subsequent repression of transposons. Its association with pi-bodies suggests a participation in the primary piRNAs metabolic process. Required prior to the pachytene stage to facilitate the production of multiple types of piRNAs, including those associated with repeats involved in the regulation of retrotransposons. May act by mediating protein-protein interactions during germ cell maturation. This is Ankyrin repeat, SAM and basic leucine zipper domain-containing protein 1 (ASZ1) from Rhinolophus ferrumequinum (Greater horseshoe bat).